The sequence spans 31 residues: Cytochrome b6-f complex subunit 6 (31 aa).

The chain crosses the membrane as a helical span at residues 4–26 (LTSYFGFLLAALTITSALFIGLS).

Belongs to the PetL family. The 4 large subunits of the cytochrome b6-f complex are cytochrome b6, subunit IV (17 kDa polypeptide, PetD), cytochrome f and the Rieske protein, while the 4 small subunits are PetG, PetL, PetM and PetN. The complex functions as a dimer.

It localises to the plastid. The protein localises to the chloroplast thylakoid membrane. Functionally, component of the cytochrome b6-f complex, which mediates electron transfer between photosystem II (PSII) and photosystem I (PSI), cyclic electron flow around PSI, and state transitions. PetL is important for photoautotrophic growth as well as for electron transfer efficiency and stability of the cytochrome b6-f complex. The sequence is that of Cytochrome b6-f complex subunit 6 from Aethionema grandiflorum (Persian stone-cress).